Consider the following 503-residue polypeptide: Lysine--tRNA ligase (503 aa).

Positions 413 and 420 each coordinate Mg(2+).

Belongs to the class-II aminoacyl-tRNA synthetase family. As to quaternary structure, homodimer. Mg(2+) serves as cofactor.

The protein resides in the cytoplasm. The enzyme catalyses tRNA(Lys) + L-lysine + ATP = L-lysyl-tRNA(Lys) + AMP + diphosphate. This chain is Lysine--tRNA ligase, found in Mannheimia succiniciproducens (strain KCTC 0769BP / MBEL55E).